Reading from the N-terminus, the 446-residue chain is Probable D-serine dehydratase (446 aa).

Lys-116 is subject to N6-(pyridoxal phosphate)lysine.

It belongs to the serine/threonine dehydratase family. DsdA subfamily. The cofactor is pyridoxal 5'-phosphate.

It catalyses the reaction D-serine = pyruvate + NH4(+). The sequence is that of Probable D-serine dehydratase from Bacillus thuringiensis subsp. konkukian (strain 97-27).